The primary structure comprises 170 residues: Phosphopantetheine adenylyltransferase (170 aa).

Thr18 contacts substrate. ATP contacts are provided by residues Thr18–Phe19 and His26. Substrate is bound by residues Lys50, Leu84, and Arg98. Residues Gly99–Arg101, Glu109, and Trp134–Ser140 contribute to the ATP site.

The protein belongs to the bacterial CoaD family. In terms of assembly, homohexamer. Mg(2+) is required as a cofactor.

Its subcellular location is the cytoplasm. The enzyme catalyses (R)-4'-phosphopantetheine + ATP + H(+) = 3'-dephospho-CoA + diphosphate. The protein operates within cofactor biosynthesis; coenzyme A biosynthesis; CoA from (R)-pantothenate: step 4/5. In terms of biological role, reversibly transfers an adenylyl group from ATP to 4'-phosphopantetheine, yielding dephospho-CoA (dPCoA) and pyrophosphate. The sequence is that of Phosphopantetheine adenylyltransferase from Desulfotalea psychrophila (strain LSv54 / DSM 12343).